A 468-amino-acid polypeptide reads, in one-letter code: Spliceosome-associated protein CWC27 homolog (468 aa).

Ser2 is subject to N-acetylserine. The PPIase cyclophilin-type domain maps to Thr11 to Val166. 2 disordered regions span residues Leu204–Thr382 and Arg427–Arg468. Positions Ser206 to Ser229 form a coiled coil. The segment covering Ser231–His241 has biased composition (basic and acidic residues). A compositionally biased stretch (acidic residues) spans Thr256–Val268. Composition is skewed to basic and acidic residues over residues Glu269–Ala287 and Gly302–Gly342. Ser273 carries the post-translational modification Phosphoserine. Residues Ala309–Gly342 adopt a coiled-coil conformation. Ser343 carries the post-translational modification Phosphoserine. 2 stretches are compositionally biased toward basic and acidic residues: residues Glu356–Arg368 and Arg453–Arg468.

The protein belongs to the cyclophilin-type PPIase family. Part of the activated spliceosome B/catalytic step 1 spliceosome, one of the forms of the spliceosome which has a well-formed active site but still cannot catalyze the branching reaction and is composed at least of 52 proteins, the U2, U5 and U6 snRNAs and the pre-mRNA. Recruited during early steps of activated spliceosome B maturation, it is probably one of the first proteins released from this complex as he matures to the spliceosome C complex. Component of the minor spliceosome, which splices U12-type introns.

The protein resides in the nucleus. As part of the spliceosome, plays a role in pre-mRNA splicing. Probable inactive PPIase with no peptidyl-prolyl cis-trans isomerase activity. As a component of the minor spliceosome, involved in the splicing of U12-type introns in pre-mRNAs. This is Spliceosome-associated protein CWC27 homolog from Rattus norvegicus (Rat).